A 545-amino-acid polypeptide reads, in one-letter code: Chaperonin GroEL (545 aa).

Residues 29 to 32 (TLGP), 86 to 90 (DGTTT), glycine 413, 476 to 478 (NAA), and aspartate 492 each bind ATP.

This sequence belongs to the chaperonin (HSP60) family. In terms of assembly, forms a cylinder of 14 subunits composed of two heptameric rings stacked back-to-back. Interacts with the co-chaperonin GroES.

It localises to the cytoplasm. It carries out the reaction ATP + H2O + a folded polypeptide = ADP + phosphate + an unfolded polypeptide.. Functionally, together with its co-chaperonin GroES, plays an essential role in assisting protein folding. The GroEL-GroES system forms a nano-cage that allows encapsulation of the non-native substrate proteins and provides a physical environment optimized to promote and accelerate protein folding. This chain is Chaperonin GroEL, found in Oceanobacillus iheyensis (strain DSM 14371 / CIP 107618 / JCM 11309 / KCTC 3954 / HTE831).